The primary structure comprises 504 residues: Multicopper oxidase MmcO (504 aa).

Residues 1-44 constitute a signal peptide (tat-type signal); that stretch reads MPELATSGNAFDKRRFSRRGFLGAGIASGFALAACASKPTASGA. Residues His-120, His-122, His-161, and His-163 each contribute to the Cu cation site. Residues 190-349 form the Plastocyanin-like domain; the sequence is EWIIILDDWT…NALARALLST (160 aa). Cu cation-binding residues include His-437, His-440, His-442, His-485, Cys-486, His-487, and His-491.

The protein belongs to the multicopper oxidase family. It depends on Cu cation as a cofactor. Post-translationally, predicted to be exported by the Tat system. The position of the signal peptide cleavage has not been experimentally proven.

The protein resides in the cell inner membrane. It is found in the periplasm. It catalyses the reaction 4 Fe(2+) + O2 + 4 H(+) = 4 Fe(3+) + 2 H2O. Its function is as follows. Required for copper resistance. In vitro, oxidizes organic substrates and Fe(2+). May act in vivo by oxidation of toxic periplasmic Cu(+). The protein is Multicopper oxidase MmcO of Mycobacterium tuberculosis (strain ATCC 25618 / H37Rv).